The sequence spans 303 residues: 2-dehydropantoate 2-reductase (303 aa).

NADP(+) contacts are provided by residues 7-12, arginine 35, asparagine 103, alanine 129, and arginine 131; that span reads GAGSLG. Asparagine 103 provides a ligand contact to substrate. Catalysis depends on lysine 182, which acts as the Proton donor. Residues asparagine 186, asparagine 190, asparagine 200, and serine 250 each coordinate substrate. Glutamate 262 contacts NADP(+).

Belongs to the ketopantoate reductase family.

The protein resides in the cytoplasm. The enzyme catalyses (R)-pantoate + NADP(+) = 2-dehydropantoate + NADPH + H(+). It functions in the pathway cofactor biosynthesis; (R)-pantothenate biosynthesis; (R)-pantoate from 3-methyl-2-oxobutanoate: step 2/2. Functionally, catalyzes the NADPH-dependent reduction of ketopantoate into pantoic acid. The polypeptide is 2-dehydropantoate 2-reductase (panE) (Pseudomonas aeruginosa (strain ATCC 15692 / DSM 22644 / CIP 104116 / JCM 14847 / LMG 12228 / 1C / PRS 101 / PAO1)).